The primary structure comprises 178 residues: UPF0302 protein BCAH187_A1683 (178 aa).

This sequence belongs to the UPF0302 family.

The chain is UPF0302 protein BCAH187_A1683 from Bacillus cereus (strain AH187).